The sequence spans 331 residues: uncharacterized protein (331 aa).

WD repeat units lie at residues 53 to 92 (KAHT…KSAV), 97 to 139 (QQST…KLIR), 144 to 184 (AHND…DSTD), and 300 to 331 (ASEE…AFRV).

It localises to the cytoplasm. The protein localises to the nucleus. This is an uncharacterized protein from Schizosaccharomyces pombe (strain 972 / ATCC 24843) (Fission yeast).